A 261-amino-acid chain; its full sequence is Epidermal growth factor-binding protein type B (261 aa).

A signal peptide spans 1-16; sequence MWFLILFLALSLGGID. Residues 17–24 constitute a propeptide, activation peptide; that stretch reads AAPPLQSR. In terms of domain architecture, Peptidase S1 spans 25 to 258; that stretch reads VVGGFNCKKN…FNSWIKDTMM (234 aa). Intrachain disulfides connect Cys31–Cys173, Cys50–Cys66, Cys152–Cys219, Cys184–Cys198, and Cys209–Cys234. His65 functions as the Charge relay system in the catalytic mechanism. Asn102 carries an N-linked (GlcNAc...) asparagine glycan. Catalysis depends on Asp120, which acts as the Charge relay system. The active-site Charge relay system is the Ser213.

It belongs to the peptidase S1 family. Kallikrein subfamily.

The enzyme catalyses Hydrolyzes mouse Ren2 protein (a species of prorenin present in the submandibular gland) on the carboxy side of the arginine residue at the Lys-Arg-|- pair in the N-terminus, to yield mature renin.. Cleaves REN2 at a dibasic site to yield mature renin. This is Epidermal growth factor-binding protein type B (Egfbp2) from Mus musculus (Mouse).